The primary structure comprises 509 residues: Probable glycine dehydrogenase (decarboxylating) subunit 2 (509 aa).

Lys278 carries the N6-(pyridoxal phosphate)lysine modification.

Belongs to the GcvP family. C-terminal subunit subfamily. The glycine cleavage system is composed of four proteins: P, T, L and H. In this organism, the P 'protein' is a heterodimer of two subunits. It depends on pyridoxal 5'-phosphate as a cofactor.

It catalyses the reaction N(6)-[(R)-lipoyl]-L-lysyl-[glycine-cleavage complex H protein] + glycine + H(+) = N(6)-[(R)-S(8)-aminomethyldihydrolipoyl]-L-lysyl-[glycine-cleavage complex H protein] + CO2. Its function is as follows. The glycine cleavage system catalyzes the degradation of glycine. The P protein binds the alpha-amino group of glycine through its pyridoxal phosphate cofactor; CO(2) is released and the remaining methylamine moiety is then transferred to the lipoamide cofactor of the H protein. In Saccharolobus islandicus (strain Y.N.15.51 / Yellowstone #2) (Sulfolobus islandicus), this protein is Probable glycine dehydrogenase (decarboxylating) subunit 2.